The following is a 212-amino-acid chain: 2-C-methyl-D-erythritol 4-phosphate cytidylyltransferase (212 aa).

The protein belongs to the IspD/TarI cytidylyltransferase family. IspD subfamily.

It catalyses the reaction 2-C-methyl-D-erythritol 4-phosphate + CTP + H(+) = 4-CDP-2-C-methyl-D-erythritol + diphosphate. It participates in isoprenoid biosynthesis; isopentenyl diphosphate biosynthesis via DXP pathway; isopentenyl diphosphate from 1-deoxy-D-xylulose 5-phosphate: step 2/6. In terms of biological role, catalyzes the formation of 4-diphosphocytidyl-2-C-methyl-D-erythritol from CTP and 2-C-methyl-D-erythritol 4-phosphate (MEP). The sequence is that of 2-C-methyl-D-erythritol 4-phosphate cytidylyltransferase from Chlamydia caviae (strain ATCC VR-813 / DSM 19441 / 03DC25 / GPIC) (Chlamydophila caviae).